Here is a 317-residue protein sequence, read N- to C-terminus: Probable cell division protein WhiA (317 aa).

The H-T-H motif DNA-binding region spans 275-308 (SLKELGEMLVPKVGKSGVNHRMRKIDELAEKLEE).

Belongs to the WhiA family.

In terms of biological role, involved in cell division and chromosome segregation. The chain is Probable cell division protein WhiA from Desulfitobacterium hafniense (strain Y51).